Consider the following 105-residue polypeptide: MAGRSGVNDEDLLKAVKIIKILYQSNPYPDSSQGTRQARRNRRRRWRARQRQIRAISERILGAYLGGPQEPVDLPLPPLGRLTLDHKEDSGDPGTESQQGTATTE.

Position 5 is a phosphoserine; by host CK2 (Ser5). A homomultimerization region spans residues 18–26; that stretch reads IIKILYQSN. Polar residues predominate over residues 24–35; that stretch reads QSNPYPDSSQGT. Disordered regions lie at residues 24 to 49 and 65 to 105; these read QSNP…WRAR and LGGP…ATTE. The Nuclear localization signal and RNA-binding (RRE) motif lies at 35-51; sequence TRQARRNRRRRWRARQR. The span at 37-49 shows a compositional bias: basic residues; the sequence is QARRNRRRRWRAR. Positions 74-85 match the Nuclear export signal and binding to XPO1 motif; that stretch reads LPLPPLGRLTLD. A compositionally biased stretch (polar residues) spans 95-105; it reads TESQQGTATTE.

It belongs to the HIV-1 REV protein family. In terms of assembly, homomultimer; when bound to the RRE. Multimeric assembly is essential for activity and may involve XPO1. Binds to human KPNB1, XPO1, TNPO1, RANBP5 and IPO7. Interacts with the viral Integrase. Interacts with human KHDRBS1. Interacts with human NAP1; this interaction decreases Rev multimerization and stimulates its activity. Interacts with human DEAD-box helicases DDX3 and DDX24; these interactions may serve for viral RNA export to the cytoplasm and packaging, respectively. Interacts with human PSIP1; this interaction may inhibit HIV-1 DNA integration by promoting dissociation of the Integrase-LEDGF/p75 complex. In terms of processing, asymmetrically arginine dimethylated at one site by host PRMT6. Methylation impairs the RNA-binding activity and export of viral RNA from the nucleus to the cytoplasm. Phosphorylated by protein kinase CK2. Presence of, and maybe binding to the N-terminus of the regulatory beta subunit of CK2 is necessary for CK2-mediated Rev's phosphorylation.

The protein localises to the host nucleus. It is found in the host nucleolus. The protein resides in the host cytoplasm. Its function is as follows. Escorts unspliced or incompletely spliced viral pre-mRNAs (late transcripts) out of the nucleus of infected cells. These pre-mRNAs carry a recognition sequence called Rev responsive element (RRE) located in the env gene, that is not present in fully spliced viral mRNAs (early transcripts). This function is essential since most viral proteins are translated from unspliced or partially spliced pre-mRNAs which cannot exit the nucleus by the pathway used by fully processed cellular mRNAs. Rev itself is translated from a fully spliced mRNA that readily exits the nucleus. Rev's nuclear localization signal (NLS) binds directly to KPNB1/Importin beta-1 without previous binding to KPNA1/Importin alpha-1. KPNB1 binds to the GDP bound form of RAN (Ran-GDP) and targets Rev to the nucleus. In the nucleus, the conversion from Ran-GDP to Ran-GTP dissociates Rev from KPNB1 and allows Rev's binding to the RRE in viral pre-mRNAs. Rev multimerization on the RRE via cooperative assembly exposes its nuclear export signal (NES) to the surface. Rev can then form a complex with XPO1/CRM1 and Ran-GTP, leading to nuclear export of the complex. Conversion from Ran-GTP to Ran-GDP mediates dissociation of the Rev/RRE/XPO1/RAN complex, so that Rev can return to the nucleus for a subsequent round of export. Beside KPNB1, also seems to interact with TNPO1/Transportin-1, RANBP5/IPO5 and IPO7/RANBP7 for nuclear import. The nucleoporin-like HRB/RIP is an essential cofactor that probably indirectly interacts with Rev to release HIV RNAs from the perinuclear region to the cytoplasm. This Homo sapiens (Human) protein is Protein Rev.